Consider the following 86-residue polypeptide: Large ribosomal subunit protein eL30 (86 aa).

This sequence belongs to the eukaryotic ribosomal protein eL30 family.

This Archaeoglobus fulgidus (strain ATCC 49558 / DSM 4304 / JCM 9628 / NBRC 100126 / VC-16) protein is Large ribosomal subunit protein eL30 (rpl30e).